The chain runs to 446 residues: MYQRALLFSALLSVSRAQQAGTAQEEVHPSLTWQRCEASGSCTEVAGSVVLDSNWRWTHSVDGYTNCYTGNEWDATLCPDNESCAQNCAVDGADYEATYGITSNGDSLTLKFVTGSNVGSRVYLMEDDETYQMFDLLNNEFTFDVDVSNLPCGLNGALYFTSMDADGGLSKYEGNTAGAKYGTGYCDSQCPRDIKFINGLGNVEGWEPSDSDANAGVGGMGTCCPEMDIWEANSISTAYTPHPCDSVEQTMCEGDSCGGTYSDDRYGGTCDPDGCDFNSYRMGNTSFYGPGAIIDTSSKFTVVTQFIADGGSLSEIKRFYVQNGEVIPNSESNISGVEGNSITSEFCTAQKTAFGDEDIFAQHGGLSAMGDAASAMVLILSIWDDHHSSMMWLDSSYPTDADPSQPGVARGTCEQGAGDPDVVESEHADASVTFSNIKFGPIGSTF.

The signal sequence occupies residues 1 to 17 (MYQRALLFSALLSVSRA). N81 carries N-linked (GlcNAc...) asparagine glycosylation. The active-site Nucleophile is the E226. E231 serves as the catalytic Proton donor. N-linked (GlcNAc...) asparagine glycans are attached at residues N284 and N333. The interval 399 to 420 (TDADPSQPGVARGTCEQGAGDP) is disordered.

It belongs to the glycosyl hydrolase 7 (cellulase C) family.

It localises to the secreted. The enzyme catalyses Hydrolysis of (1-&gt;4)-beta-D-glucosidic linkages in cellulose and cellotetraose, releasing cellobiose from the non-reducing ends of the chains.. Its function is as follows. The biological conversion of cellulose to glucose generally requires three types of hydrolytic enzymes: (1) Endoglucanases which cut internal beta-1,4-glucosidic bonds; (2) Exocellobiohydrolases that cut the disaccharide cellobiose from the non-reducing end of the cellulose polymer chain; (3) Beta-1,4-glucosidases which hydrolyze the cellobiose and other short cello-oligosaccharides to glucose. The sequence is that of Probable 1,4-beta-D-glucan cellobiohydrolase A (cbhA) from Emericella nidulans (strain FGSC A4 / ATCC 38163 / CBS 112.46 / NRRL 194 / M139) (Aspergillus nidulans).